Here is a 342-residue protein sequence, read N- to C-terminus: N-acetyl-gamma-glutamyl-phosphate reductase (342 aa).

Residue C147 is part of the active site.

Belongs to the NAGSA dehydrogenase family. Type 1 subfamily.

The protein localises to the cytoplasm. The catalysed reaction is N-acetyl-L-glutamate 5-semialdehyde + phosphate + NADP(+) = N-acetyl-L-glutamyl 5-phosphate + NADPH + H(+). It participates in amino-acid biosynthesis; L-arginine biosynthesis; N(2)-acetyl-L-ornithine from L-glutamate: step 3/4. Catalyzes the NADPH-dependent reduction of N-acetyl-5-glutamyl phosphate to yield N-acetyl-L-glutamate 5-semialdehyde. In Campylobacter jejuni subsp. jejuni serotype O:2 (strain ATCC 700819 / NCTC 11168), this protein is N-acetyl-gamma-glutamyl-phosphate reductase.